The following is a 131-amino-acid chain: D-ribose pyranase (131 aa).

The active-site Proton donor is the His20. Residues Asp28, His98, and 120-122 (YAN) each bind substrate.

Belongs to the RbsD / FucU family. RbsD subfamily. In terms of assembly, homodecamer.

It localises to the cytoplasm. It carries out the reaction beta-D-ribopyranose = beta-D-ribofuranose. Its pathway is carbohydrate metabolism; D-ribose degradation; D-ribose 5-phosphate from beta-D-ribopyranose: step 1/2. Functionally, catalyzes the interconversion of beta-pyran and beta-furan forms of D-ribose. The polypeptide is D-ribose pyranase (Bacillus cereus (strain G9842)).